The sequence spans 134 residues: uncharacterized protein (134 aa).

3 consecutive transmembrane segments (helical) span residues 5-25 (FGIFSFLAVSVSAAGFFFGGF), 30-50 (LILLSLMAIEFISTTLKETII), and 62-82 (LVKKLVTLALISVCHFFDQLL).

This sequence belongs to the bacteriophage holin family. Cp-1 holin subfamily.

The protein localises to the cell membrane. This is an uncharacterized protein from Bacillus subtilis (strain 168).